The chain runs to 102 residues: Large ribosomal subunit protein uL24 (102 aa).

The protein belongs to the universal ribosomal protein uL24 family. Part of the 50S ribosomal subunit.

Its function is as follows. One of two assembly initiator proteins, it binds directly to the 5'-end of the 23S rRNA, where it nucleates assembly of the 50S subunit. Functionally, one of the proteins that surrounds the polypeptide exit tunnel on the outside of the subunit. The sequence is that of Large ribosomal subunit protein uL24 from Rhizobium leguminosarum bv. trifolii (strain WSM2304).